The sequence spans 205 residues: Histone H1, early embryonic (205 aa).

Disordered stretches follow at residues 1-21 (MAEK…HPPA) and 94-205 (AKAQ…AKSK). Positions 17-91 (AHPPAAEMVA…GASGSFKVNV (75 aa)) constitute an H15 domain. Positions 98–124 (ASEKAKKEKEKAKLLAQREKAKEKGCS) are enriched in basic and acidic residues. Composition is skewed to basic residues over residues 135 to 150 (PKKV…KPVK) and 157 to 205 (EKKK…AKSK).

The protein belongs to the histone H1/H5 family.

It localises to the nucleus. It is found in the chromosome. In terms of biological role, histones H1 are necessary for the condensation of nucleosome chains into higher-order structures. This is Histone H1, early embryonic from Strongylocentrotus purpuratus (Purple sea urchin).